Here is a 383-residue protein sequence, read N- to C-terminus: 1-deoxy-D-xylulose 5-phosphate reductoisomerase (383 aa).

8 residues coordinate NADPH: Thr10, Gly11, Ser12, Ile13, Gly36, Lys37, Asn38, and Asn122. Lys123 is a binding site for 1-deoxy-D-xylulose 5-phosphate. Glu124 serves as a coordination point for NADPH. Asp148 serves as a coordination point for Mn(2+). The 1-deoxy-D-xylulose 5-phosphate site is built by Ser149, Glu150, Ser174, and His197. Glu150 contributes to the Mn(2+) binding site. Position 203 (Gly203) interacts with NADPH. The 1-deoxy-D-xylulose 5-phosphate site is built by Ser210, Asn215, Lys216, and Glu219. Mn(2+) is bound at residue Glu219.

Belongs to the DXR family. Mg(2+) is required as a cofactor. Mn(2+) serves as cofactor.

The enzyme catalyses 2-C-methyl-D-erythritol 4-phosphate + NADP(+) = 1-deoxy-D-xylulose 5-phosphate + NADPH + H(+). It participates in isoprenoid biosynthesis; isopentenyl diphosphate biosynthesis via DXP pathway; isopentenyl diphosphate from 1-deoxy-D-xylulose 5-phosphate: step 1/6. Its function is as follows. Catalyzes the NADPH-dependent rearrangement and reduction of 1-deoxy-D-xylulose-5-phosphate (DXP) to 2-C-methyl-D-erythritol 4-phosphate (MEP). This Bacillus licheniformis (strain ATCC 14580 / DSM 13 / JCM 2505 / CCUG 7422 / NBRC 12200 / NCIMB 9375 / NCTC 10341 / NRRL NRS-1264 / Gibson 46) protein is 1-deoxy-D-xylulose 5-phosphate reductoisomerase.